The chain runs to 333 residues: Isoaspartyl peptidase/L-asparaginase (333 aa).

Residue threonine 191 is the Nucleophile of the active site. Substrate contacts are provided by residues arginine 219–aspartate 222 and threonine 242–glycine 245.

Belongs to the Ntn-hydrolase family. Heterodimer of an alpha and beta chain produced by autocleavage. This heterodimer may then dimerize in turn, giving rise to a heterotetramer. Cleaved into an alpha and beta chain by autocatalysis; this activates the enzyme. The N-terminal residue of the beta subunit is responsible for the nucleophile hydrolase activity. Present in testis, brain, liver, kidney, heart and skeletal muscle. In brain, specifically present in the astrocytic lineage. Present in sperm (at protein level).

The protein localises to the cytoplasm. It carries out the reaction L-asparagine + H2O = L-aspartate + NH4(+). The enzyme catalyses Cleavage of a beta-linked Asp residue from the N-terminus of a polypeptide.. In terms of biological role, has both L-asparaginase and beta-aspartyl peptidase activity. Is highly active with L-Asp beta-methyl ester. Besides, has catalytic activity toward beta-aspartyl dipeptides and their methyl esters, including beta-L-Asp-L-Phe, beta-L-Asp-L-Phe methyl ester (aspartame), beta-L-Asp-L-Ala, beta-L-Asp-L-Leu and beta-L-Asp-L-Lys. Does not have aspartylglucosaminidase activity and is inactive toward GlcNAc-L-Asn. Likewise, has no activity toward glutamine. May be involved in the production of L-aspartate, which can act as an excitatory neurotransmitter in some brain regions. The polypeptide is Isoaspartyl peptidase/L-asparaginase (Asrgl1) (Rattus norvegicus (Rat)).